Here is a 91-residue protein sequence, read N- to C-terminus: Small ribosomal subunit protein bS6 (91 aa).

It belongs to the bacterial ribosomal protein bS6 family.

Functionally, binds together with bS18 to 16S ribosomal RNA. The polypeptide is Small ribosomal subunit protein bS6 (Leptospira interrogans serogroup Icterohaemorrhagiae serovar copenhageni (strain Fiocruz L1-130)).